We begin with the raw amino-acid sequence, 425 residues long: Histidine--tRNA ligase (425 aa).

The protein belongs to the class-II aminoacyl-tRNA synthetase family. In terms of assembly, homodimer.

The protein localises to the cytoplasm. The enzyme catalyses tRNA(His) + L-histidine + ATP = L-histidyl-tRNA(His) + AMP + diphosphate + H(+). The polypeptide is Histidine--tRNA ligase (Listeria innocua serovar 6a (strain ATCC BAA-680 / CLIP 11262)).